Reading from the N-terminus, the 1512-residue chain is Zinc finger protein 608 (1512 aa).

Disordered stretches follow at residues 1–23 (MSVN…YDSG), 46–74 (QKFE…SGAG), 89–237 (QASA…HLYG), 260–295 (VAAA…HRRI), and 417–545 (RFCE…FLDQ). Low complexity-rich tracts occupy residues 51-74 (NNST…SGAG) and 151-185 (SALG…GSCG). The segment covering 201 to 218 (AKRDKDAGKSRKDKHDLL) has biased composition (basic and acidic residues). Residues 220–230 (GHQNGSGSQAP) show a composition bias toward polar residues. The segment covering 260–270 (VAAAGEVSKSA) has biased composition (low complexity). The stretch at 278 to 304 (NSMLVKKEEEEEESHRRIKKLKTEKVD) forms a coiled coil. A Glycyl lysine isopeptide (Lys-Gly) (interchain with G-Cter in SUMO2) cross-link involves residue K283. A phosphoserine mark is found at S421 and S424. Positions 449–458 (ASFTESRGLQ) are enriched in polar residues. T481 carries the phosphothreonine modification. A Phosphoserine modification is found at S493. Polar residues predominate over residues 526-535 (NSRSTPTTPQ). The C2H2-type zinc-finger motif lies at 553–578 (IDCPHPNCNKKYKHINGLRYHQAHAH). Disordered stretches follow at residues 622-665 (LKAP…KKKG), 713-750 (DKEK…PQLI), and 777-858 (QATP…KDHL). S627 carries the post-translational modification Phosphoserine. Residues 713–729 (DKEKGKKATNCKTDKNL) are compositionally biased toward basic and acidic residues. Pro residues predominate over residues 781-790 (KSPPLKPIQP). S782 carries the post-translational modification Phosphoserine. The segment covering 818–858 (KLKDKEGKETGSPKMDAKLGKLEDSKGASKDLPGHFLKDHL) has biased composition (basic and acidic residues). A Glycyl lysine isopeptide (Lys-Gly) (interchain with G-Cter in SUMO2) cross-link involves residue K880. A Phosphoserine modification is found at S895. Residues 925 to 934 (NGAESSAAKT) are compositionally biased toward polar residues. 2 disordered regions span residues 925-996 (NGAE…HSPY) and 1011-1066 (PGQV…HQSV). A compositionally biased stretch (low complexity) spans 960-973 (SKASSPSDIISSKD). Position 964 is a phosphoserine (S964). Residues 979–989 (HSSTTAQSSQL) are compositionally biased toward polar residues. Residues 1030–1054 (IKKESEEDAEKKDKAEQLDSKKVDH) are compositionally biased toward basic and acidic residues. A compositionally biased stretch (polar residues) spans 1055–1066 (NSASLQPQHQSV). S1098 bears the Phosphoserine mark. The tract at residues 1117 to 1192 (QKMAQTGRGD…SQLLSNHQQQ (76 aa)) is disordered. A Glycyl lysine isopeptide (Lys-Gly) (interchain with G-Cter in SUMO2) cross-link involves residue K1118. The span at 1125–1145 (GDCERKSELPLKELGKEETKQ) shows a compositional bias: basic and acidic residues. Positions 1146 to 1157 (KNMPSATISKAP) are enriched in polar residues. Glycyl lysine isopeptide (Lys-Gly) (interchain with G-Cter in SUMO2) cross-links involve residues K1176 and K1182. Low complexity predominate over residues 1183–1192 (SQLLSNHQQQ). Glycyl lysine isopeptide (Lys-Gly) (interchain with G-Cter in SUMO2) cross-links involve residues K1199, K1216, K1234, and K1250. Positions 1220 to 1335 (DSMKQTGVDP…RGTRVAVSSP (116 aa)) are disordered. Residues 1231–1241 (SRFKQDPDSRT) show a composition bias toward basic and acidic residues. Basic and acidic residues-rich tracts occupy residues 1253–1276 (DQQK…KTPN) and 1291–1327 (IKEE…DSRG). Residues K1292, K1310, and K1414 each participate in a glycyl lysine isopeptide (Lys-Gly) (interchain with G-Cter in SUMO2) cross-link. The disordered stretch occupies residues 1423-1459 (ANQYRSKSPAPVEKATAEREREAERERDRHSPFGQRH). Positions 1437 to 1453 (ATAEREREAERERDRHS) are enriched in basic and acidic residues.

Transcription factor, which represses ZNF609 transcription. The protein is Zinc finger protein 608 (ZNF608) of Homo sapiens (Human).